The primary structure comprises 476 residues: Cysteine--tRNA ligase (476 aa).

Cysteine 31 is a Zn(2+) binding site. The 'HIGH' region motif lies at 33–43 (PTVYNYAHIGN). Residues cysteine 211, histidine 236, and glutamate 240 each contribute to the Zn(2+) site. Residues 269–273 (KMSKS) carry the 'KMSKS' region motif. Lysine 272 provides a ligand contact to ATP.

It belongs to the class-I aminoacyl-tRNA synthetase family. In terms of assembly, monomer. Zn(2+) is required as a cofactor.

The protein localises to the cytoplasm. The catalysed reaction is tRNA(Cys) + L-cysteine + ATP = L-cysteinyl-tRNA(Cys) + AMP + diphosphate. This Xanthomonas oryzae pv. oryzae (strain MAFF 311018) protein is Cysteine--tRNA ligase.